Reading from the N-terminus, the 261-residue chain is UPF0246 protein Vapar_1301 (261 aa).

It belongs to the UPF0246 family.

This Variovorax paradoxus (strain S110) protein is UPF0246 protein Vapar_1301.